The chain runs to 221 residues: Small ribosomal subunit protein uS3 (221 aa).

Residues 39 to 107 enclose the KH type-2 domain; sequence LRKFLKDKLK…EVFLSIQEVR (69 aa).

The protein belongs to the universal ribosomal protein uS3 family. In terms of assembly, part of the 30S ribosomal subunit. Forms a tight complex with proteins S10 and S14.

In terms of biological role, binds the lower part of the 30S subunit head. Binds mRNA in the 70S ribosome, positioning it for translation. The polypeptide is Small ribosomal subunit protein uS3 (Bdellovibrio bacteriovorus (strain ATCC 15356 / DSM 50701 / NCIMB 9529 / HD100)).